Reading from the N-terminus, the 61-residue chain is Small ribosomal subunit protein uS14 (61 aa).

Residues Cys24, Cys27, Cys40, and Cys43 each coordinate Zn(2+).

It belongs to the universal ribosomal protein uS14 family. Zinc-binding uS14 subfamily. Part of the 30S ribosomal subunit. Contacts proteins S3 and S10. Requires Zn(2+) as cofactor.

Functionally, binds 16S rRNA, required for the assembly of 30S particles and may also be responsible for determining the conformation of the 16S rRNA at the A site. The protein is Small ribosomal subunit protein uS14 of Spiroplasma citri.